The following is a 180-amino-acid chain: Crossover junction endodeoxyribonuclease RuvC (180 aa).

Active-site residues include aspartate 7, glutamate 66, and aspartate 138. Positions 7, 66, and 138 each coordinate Mg(2+).

It belongs to the RuvC family. Homodimer which binds Holliday junction (HJ) DNA. The HJ becomes 2-fold symmetrical on binding to RuvC with unstacked arms; it has a different conformation from HJ DNA in complex with RuvA. In the full resolvosome a probable DNA-RuvA(4)-RuvB(12)-RuvC(2) complex forms which resolves the HJ. The cofactor is Mg(2+).

The protein localises to the cytoplasm. It catalyses the reaction Endonucleolytic cleavage at a junction such as a reciprocal single-stranded crossover between two homologous DNA duplexes (Holliday junction).. The RuvA-RuvB-RuvC complex processes Holliday junction (HJ) DNA during genetic recombination and DNA repair. Endonuclease that resolves HJ intermediates. Cleaves cruciform DNA by making single-stranded nicks across the HJ at symmetrical positions within the homologous arms, yielding a 5'-phosphate and a 3'-hydroxyl group; requires a central core of homology in the junction. The consensus cleavage sequence is 5'-(A/T)TT(C/G)-3'. Cleavage occurs on the 3'-side of the TT dinucleotide at the point of strand exchange. HJ branch migration catalyzed by RuvA-RuvB allows RuvC to scan DNA until it finds its consensus sequence, where it cleaves and resolves the cruciform DNA. The sequence is that of Crossover junction endodeoxyribonuclease RuvC from Burkholderia multivorans (strain ATCC 17616 / 249).